We begin with the raw amino-acid sequence, 348 residues long: tRNA N6-adenosine threonylcarbamoyltransferase (348 aa).

Residues histidine 115 and histidine 119 each contribute to the Fe cation site. Substrate-binding positions include 138–142, aspartate 171, glycine 184, and asparagine 276; that span reads LVSGG. Aspartate 304 is a Fe cation binding site.

This sequence belongs to the KAE1 / TsaD family. Fe(2+) is required as a cofactor.

The protein localises to the cytoplasm. It catalyses the reaction L-threonylcarbamoyladenylate + adenosine(37) in tRNA = N(6)-L-threonylcarbamoyladenosine(37) in tRNA + AMP + H(+). In terms of biological role, required for the formation of a threonylcarbamoyl group on adenosine at position 37 (t(6)A37) in tRNAs that read codons beginning with adenine. Is involved in the transfer of the threonylcarbamoyl moiety of threonylcarbamoyl-AMP (TC-AMP) to the N6 group of A37, together with TsaE and TsaB. TsaD likely plays a direct catalytic role in this reaction. The polypeptide is tRNA N6-adenosine threonylcarbamoyltransferase (Xylella fastidiosa (strain 9a5c)).